Consider the following 862-residue polypeptide: Leucine--tRNA ligase (862 aa).

A 'HIGH' region motif is present at residues 49-59; it reads PYPSGRIHMGH. Residues 625 to 629 carry the 'KMSKS' region motif; the sequence is KMSKS. ATP is bound at residue K628.

It belongs to the class-I aminoacyl-tRNA synthetase family.

The protein localises to the cytoplasm. The catalysed reaction is tRNA(Leu) + L-leucine + ATP = L-leucyl-tRNA(Leu) + AMP + diphosphate. The sequence is that of Leucine--tRNA ligase from Paramagnetospirillum magneticum (strain ATCC 700264 / AMB-1) (Magnetospirillum magneticum).